Here is a 328-residue protein sequence, read N- to C-terminus: Renalase (328 aa).

Residues alanine 13, 32-33, arginine 40, and 56-57 contribute to the FAD site; these read DK and QY. Residues 57–61 and 96–98 contribute to the substrate site; these read YFTAR and SPD. Residue isoleucine 128 participates in FAD binding. Threonine 185 is a substrate binding site. Aspartate 302 provides a ligand contact to FAD. Arginine 308 contacts substrate. An FAD-binding site is contributed by valine 309.

It belongs to the bacterial renalase family. Requires FAD as cofactor.

It carries out the reaction 1,2-dihydro-beta-NAD + O2 + H(+) = H2O2 + NAD(+). The enzyme catalyses 1,2-dihydro-beta-NADP + O2 + H(+) = H2O2 + NADP(+). The catalysed reaction is 1,6-dihydro-beta-NADP + O2 + H(+) = H2O2 + NADP(+). It catalyses the reaction 1,6-dihydro-beta-NAD + O2 + H(+) = H2O2 + NAD(+). Functionally, catalyzes the oxidation of the 1,2-dihydro- and 1,6-dihydro- isomeric forms of beta-NAD(P) back to beta-NAD(P)+. Has a preference for 1,2-dihydro-beta-NAD as substrate. May serve to protect primary metabolism dehydrogenases from inhibition by the 1,2-dihydro- and 1,6-dihydro-beta-NAD(P) isomers. The polypeptide is Renalase (Pseudomonas savastanoi pv. phaseolicola (strain 1448A / Race 6) (Pseudomonas syringae pv. phaseolicola (strain 1448A / Race 6))).